The following is a 96-amino-acid chain: UPF0235 protein YpsIP31758_0827 (96 aa).

This sequence belongs to the UPF0235 family.

This Yersinia pseudotuberculosis serotype O:1b (strain IP 31758) protein is UPF0235 protein YpsIP31758_0827.